The sequence spans 230 residues: Probable septum site-determining protein MinC (230 aa).

The protein belongs to the MinC family. Interacts with MinD and FtsZ.

In terms of biological role, cell division inhibitor that blocks the formation of polar Z ring septums. Rapidly oscillates between the poles of the cell to destabilize FtsZ filaments that have formed before they mature into polar Z rings. Prevents FtsZ polymerization. This is Probable septum site-determining protein MinC from Rhodopseudomonas palustris (strain BisA53).